The primary structure comprises 393 residues: NAD(P)H-quinone oxidoreductase subunit H, chloroplastic (393 aa).

The protein belongs to the complex I 49 kDa subunit family. NDH is composed of at least 16 different subunits, 5 of which are encoded in the nucleus.

Its subcellular location is the plastid. The protein resides in the chloroplast thylakoid membrane. It catalyses the reaction a plastoquinone + NADH + (n+1) H(+)(in) = a plastoquinol + NAD(+) + n H(+)(out). It carries out the reaction a plastoquinone + NADPH + (n+1) H(+)(in) = a plastoquinol + NADP(+) + n H(+)(out). Functionally, NDH shuttles electrons from NAD(P)H:plastoquinone, via FMN and iron-sulfur (Fe-S) centers, to quinones in the photosynthetic chain and possibly in a chloroplast respiratory chain. The immediate electron acceptor for the enzyme in this species is believed to be plastoquinone. Couples the redox reaction to proton translocation, and thus conserves the redox energy in a proton gradient. This Ipomoea purpurea (Common morning glory) protein is NAD(P)H-quinone oxidoreductase subunit H, chloroplastic.